The following is a 1084-amino-acid chain: Siderophore biosynthesis regulatory protein URBS1 (1084 aa).

Disordered regions lie at residues 1 to 164 (MALP…QSSS), 245 to 283 (AEEHAKMQRYSDEHPRAMNPTSRASYEHESRGMPYRDSY), and 300 to 337 (RPVHHADSSTNSPQYVPGDVYEHEGSGSPPAAHHAGMR). Low complexity predominate over residues 23–51 (QAAAASSSSSSSSSHHPPPRIAARPIAPA). Polar residues-rich tracts occupy residues 97-106 (SHHNASSTAT) and 128-141 (RSQSPIAAFRNRSQ). Residues 150-164 (PSRSQPNSPLLQSSS) show a composition bias toward low complexity. Over residues 245–260 (AEEHAKMQRYSDEHPR) the composition is skewed to basic and acidic residues. Residues 338–362 (CSNCGVTSTPLWRRAPDGSTICNAC) form a GATA-type 1 zinc finger. Disordered stretches follow at residues 372 to 405 (HRSASNRLSGSDASPPTHEAKLAAAGPSCSREDD) and 442 to 472 (VSKRESQTSEDPPPARTAERAPPVAEEKMDD). Polar residues predominate over residues 373-385 (RSASNRLSGSDAS). A GATA-type 2 zinc finger spans residues 482-506 (CTNCQTTTTPLWRRDEDGNNICNAC). Disordered regions lie at residues 559-595 (IAPAAGRNAGDSTPKSTESRRASKKSSLTSEQAMREA), 643-679 (RAGADTARTSHPDDSRSSKRPRQSYPLAPREAYDERD), 692-803 (THAA…TKLS), 841-940 (EAAG…SRRN), 953-1019 (AAVP…DDHW), and 1040-1084 (ARPV…APRT). Composition is skewed to basic and acidic residues over residues 650–659 (RTSHPDDSRS) and 715–725 (RLGRSELHGES). Over residues 752 to 781 (PHHHHHHHHHHANHASHAVHHGHHHHHHHP) the composition is skewed to basic residues. Basic and acidic residues predominate over residues 875-888 (RGTRSGHDSIKQEA). Positions 961-970 (SPPSTVSNPA) are enriched in polar residues. A compositionally biased stretch (low complexity) spans 1070 to 1084 (PVASSPSQAVSAPRT).

It is found in the nucleus. Its function is as follows. Involved in the regulation of secreted ferrichrome-type siderophores. Acts directly or indirectly to repress the biosynthesis of siderophores. The polypeptide is Siderophore biosynthesis regulatory protein URBS1 (URBS1) (Mycosarcoma maydis (Corn smut fungus)).